Consider the following 355-residue polypeptide: Anthocyanin synthase (355 aa).

Residues tyrosine 145 and lysine 216 each contribute to the substrate site. The 100-residue stretch at 211-310 (LLLQMKINYY…RISWAVFCEP (100 aa)) folds into the Fe2OG dioxygenase domain. 218–220 (NYY) provides a ligand contact to 2-oxoglutarate. Fe cation is bound at residue histidine 235. Residue threonine 236 participates in substrate binding. The Fe cation site is built by aspartate 237 and histidine 291. 2-oxoglutarate contacts are provided by residues arginine 301 and 301-303 (RIS). Residues glutamate 309 and lysine 344 each contribute to the substrate site.

This sequence belongs to the iron/ascorbate-dependent oxidoreductase family. L-ascorbate is required as a cofactor. It depends on Fe(2+) as a cofactor. As to expression, expressed in stems and leaves. Expressed at low levels in ovaries.

It carries out the reaction a (2R,3S,4S)-leucoanthocyanidin + 2-oxoglutarate + O2 = a 4-H-anthocyanidin with a 3-hydroxy group + succinate + CO2 + 2 H2O. It functions in the pathway pigment biosynthesis; anthocyanin biosynthesis. In terms of biological role, involved in anthocyanin biosynthesis by catalyzing the oxidation of leucoanthocyanidins into anthocyanidins. Required for the accumulation of anthocyanin in red-fleshed kiwifruit varieties. In Actinidia chinensis var. chinensis (Chinese soft-hair kiwi), this protein is Anthocyanin synthase.